The following is a 219-amino-acid chain: Thiamine-phosphate synthase (219 aa).

4-amino-2-methyl-5-(diphosphooxymethyl)pyrimidine is bound by residues 48-52 (QFRQK) and Asn84. Positions 85 and 104 each coordinate Mg(2+). Position 123 (Ser123) interacts with 4-amino-2-methyl-5-(diphosphooxymethyl)pyrimidine. 150–152 (TPS) contacts 2-[(2R,5Z)-2-carboxy-4-methylthiazol-5(2H)-ylidene]ethyl phosphate. Lys153 provides a ligand contact to 4-amino-2-methyl-5-(diphosphooxymethyl)pyrimidine. Residues Gly181 and 199–200 (IS) contribute to the 2-[(2R,5Z)-2-carboxy-4-methylthiazol-5(2H)-ylidene]ethyl phosphate site.

Belongs to the thiamine-phosphate synthase family. Mg(2+) serves as cofactor.

The catalysed reaction is 2-[(2R,5Z)-2-carboxy-4-methylthiazol-5(2H)-ylidene]ethyl phosphate + 4-amino-2-methyl-5-(diphosphooxymethyl)pyrimidine + 2 H(+) = thiamine phosphate + CO2 + diphosphate. It catalyses the reaction 2-(2-carboxy-4-methylthiazol-5-yl)ethyl phosphate + 4-amino-2-methyl-5-(diphosphooxymethyl)pyrimidine + 2 H(+) = thiamine phosphate + CO2 + diphosphate. It carries out the reaction 4-methyl-5-(2-phosphooxyethyl)-thiazole + 4-amino-2-methyl-5-(diphosphooxymethyl)pyrimidine + H(+) = thiamine phosphate + diphosphate. It participates in cofactor biosynthesis; thiamine diphosphate biosynthesis; thiamine phosphate from 4-amino-2-methyl-5-diphosphomethylpyrimidine and 4-methyl-5-(2-phosphoethyl)-thiazole: step 1/1. In terms of biological role, condenses 4-methyl-5-(beta-hydroxyethyl)thiazole monophosphate (THZ-P) and 2-methyl-4-amino-5-hydroxymethyl pyrimidine pyrophosphate (HMP-PP) to form thiamine monophosphate (TMP). The protein is Thiamine-phosphate synthase of Helicobacter pylori (strain ATCC 700392 / 26695) (Campylobacter pylori).